The sequence spans 194 residues: Cupin-domain-containing oxidoreductase virC (194 aa).

The Cupin type-2 domain maps to 106-175 (IDFAPNVISP…GTLPGRMMWV (70 aa)).

It belongs to the virC family.

It participates in secondary metabolite biosynthesis. In terms of biological role, cupin-domain-containing oxidoreductase; part of the gene cluster that mediates the biosynthesis of virensols and trichoxide, fungal natural products that contain or are derived from a salicylaldehyde core. The pathway begins with the synthesis of the reduced chain in virensol C by the highly reducing polyketide synthase virA via condensation of one acetate and 8 malonate units. VirA has interesting programming rules since the first 2 ketides are fully reduced, the 3 following ketides undergo beta-dehydration, and the last 3 ketides are only reduced to beta-hydroxys to yield the trihydroxy portion. The production of aldehyde virensol C by virA alone is surprising, since virA does not contain a reductase (R) domain that is typically associated with reductive product release in HRPKS. The cupin-domain enzyme virC is involved in enhancing virA product turnover. The short-chain dehydrogenase virB then oxidizes the C-7 alcohol of virensol C to a ketone, yielding virensol D. Virensol D is further transformed to salicylaldehyde 5-deoxyaurocitrin by the short-chain dehydrogenase virD. VirD catalyzes the dehydrogenation of C-3 to form the beta-ketone aldehyde, which is followed by the generation of the nucleophilic C-2 that is required for the intramolecular aldol condensation between C-2 and C-7, itself followed by dehydration and aromatization which leads to salicylaldehyde 5-deoxyaurocitrin. While the dehydrogenation of virensol D is definitely catalyzed by virD, the aldol condensation and dehydration may be uncatalyzed or assisted by virD. The short chain dehydrogenase virG then converts salicylaldehyde 5-deoxyaurocitrin into virensol B which is further hydroxylated by the cytochrome P450 monooxygenase virE to yield the hydroquinone virensol A. VirI then may oxidize virensol A to form the quinone, while virH performs the epoxidation. Finally, the two remaining short-chain dehydrogenases, virK and virL, are probably responsible for reducing the ketones to the corresponding alcohols to furnish the epoxycyclohexanol structure in trichoxide. This chain is Cupin-domain-containing oxidoreductase virC, found in Hypocrea virens (strain Gv29-8 / FGSC 10586) (Gliocladium virens).